The chain runs to 257 residues: Lysine-rich coiled-coil protein 1 (257 aa).

A disordered region spans residues 145–257 (NTSAHQASYK…MLWDQSILGF (113 aa)). Residues 152 to 162 (SYKHIHQKRKR) show a composition bias toward basic residues. 4 stretches are compositionally biased toward basic and acidic residues: residues 163 to 176 (HTEEGREKPEEERP), 183 to 193 (ACEEIDLDKYK), 200 to 212 (TEAETVRVSTEKL), and 219 to 228 (RSRDVASKKE). Residues 210-248 (EKLKNRKEKRSRDVASKKEERKRRKEKKEQGQERTEEEM) are a coiled coil.

In Bos taurus (Bovine), this protein is Lysine-rich coiled-coil protein 1 (KRCC1).